The chain runs to 142 residues: uncharacterized protein (142 aa).

A helical membrane pass occupies residues 75–91 (YAAILAQVSFAFLCTGF).

The protein localises to the membrane. This is an uncharacterized protein from Haemophilus influenzae (strain ATCC 51907 / DSM 11121 / KW20 / Rd).